We begin with the raw amino-acid sequence, 129 residues long: Small ribosomal subunit protein uS11 (129 aa).

The protein belongs to the universal ribosomal protein uS11 family. Part of the 30S ribosomal subunit. Interacts with proteins S7 and S18. Binds to IF-3.

In terms of biological role, located on the platform of the 30S subunit, it bridges several disparate RNA helices of the 16S rRNA. Forms part of the Shine-Dalgarno cleft in the 70S ribosome. This is Small ribosomal subunit protein uS11 from Rhodopseudomonas palustris (strain BisB5).